We begin with the raw amino-acid sequence, 344 residues long: Small ribosomal subunit protein uS3 (344 aa).

The KH type-2 domain occupies 38-106 (LKAALRERLK…EVFIDIQEVH (69 aa)). The interval 217–344 (PEPEPRREQR…QKPEGSGENQ (128 aa)) is disordered. Composition is skewed to basic and acidic residues over residues 219 to 259 (PEPR…RGDR) and 335 to 344 (QKPEGSGENQ).

This sequence belongs to the universal ribosomal protein uS3 family. Part of the 30S ribosomal subunit. Forms a tight complex with proteins S10 and S14.

Binds the lower part of the 30S subunit head. Binds mRNA in the 70S ribosome, positioning it for translation. In Solibacter usitatus (strain Ellin6076), this protein is Small ribosomal subunit protein uS3.